A 162-amino-acid polypeptide reads, in one-letter code: Tegument protein BLRF2 (162 aa).

Residues 12 to 43 (VKAVDMSMEDMAARLARLESENKALKQQVLRG) adopt a coiled-coil conformation. A disordered region spans residues 118–162 (SMLGAKGQPSPGEGTRPRESNDPNATRRARSRSRGREAKKVQISD). The segment covering 151–162 (RGREAKKVQISD) has biased composition (basic and acidic residues).

It belongs to the herpesviridae BLRF2 family. As to quaternary structure, homooligomer; homooligomerizes and binds double-stranded DNA (dsDNA) cooperatively. Interacts with host CGAS.

It is found in the virion tegument. It localises to the host cytoplasm. Its function is as follows. Plays a role in the inhibition of host innate immune system by targeting the CGAS enzymatic activity which is the principal cytosolic DNA sensor that detects invading viral DNA. Acts by inhibiting CGAS-DNA phase separation: directly binds double-stranded DNA (dsDNA) in a length dependent but sequence independent manner and is able to form DNA-induced phase separation in infected cells. DNA phase separation of ORF52 mediates disruption of liquid-like droplets in which CGAS is activated, thereby preventing CGAS activity. This is Tegument protein BLRF2 from Homo sapiens (Human).